Here is a 244-residue protein sequence, read N- to C-terminus: Salivary antigen-5 (244 aa).

Positions 1-23 are cleaved as a signal peptide; sequence MAKAHSSLVFCLLALALVRFAQA. One can recognise an SCP domain in the interval 46-202; sequence LDFHNKFREL…WYTGYLVCNY (157 aa). N-linked (GlcNAc...) asparagine glycosylation is found at Asn106 and Asn172.

Belongs to the CRISP family. Venom allergen 5-like subfamily. In terms of tissue distribution, salivary gland (at protein level).

Its subcellular location is the secreted. In terms of biological role, inhibits host platelet aggregation induced by low doses of collagen. This Triatoma infestans (Assassin bug) protein is Salivary antigen-5.